Here is a 291-residue protein sequence, read N- to C-terminus: Aspartate carbamoyltransferase catalytic subunit (291 aa).

Residues Arg49 and Thr50 each coordinate carbamoyl phosphate. An L-aspartate-binding site is contributed by Lys77. Residues Arg99, His127, and Gln130 each coordinate carbamoyl phosphate. Residues Arg160 and Arg210 each coordinate L-aspartate. Positions 249 and 250 each coordinate carbamoyl phosphate.

The protein belongs to the aspartate/ornithine carbamoyltransferase superfamily. ATCase family. In terms of assembly, heterododecamer (2C3:3R2) of six catalytic PyrB chains organized as two trimers (C3), and six regulatory PyrI chains organized as three dimers (R2).

The catalysed reaction is carbamoyl phosphate + L-aspartate = N-carbamoyl-L-aspartate + phosphate + H(+). Its pathway is pyrimidine metabolism; UMP biosynthesis via de novo pathway; (S)-dihydroorotate from bicarbonate: step 2/3. In terms of biological role, catalyzes the condensation of carbamoyl phosphate and aspartate to form carbamoyl aspartate and inorganic phosphate, the committed step in the de novo pyrimidine nucleotide biosynthesis pathway. In Sulfurimonas denitrificans (strain ATCC 33889 / DSM 1251) (Thiomicrospira denitrificans (strain ATCC 33889 / DSM 1251)), this protein is Aspartate carbamoyltransferase catalytic subunit.